The sequence spans 474 residues: MIHSNKVATVVLALISSWPADGTNNHGLKLQKAQAICKMSKELKATAMRAANDAKLKITEILELENVFAAMIPNATKGTEADGCTDYNAVFLEANNTAAETVSKIATLAESATKAAGAAGRAAGVLDEFIAALAQAQGATGLYCIQGSGTGAATHTELADCFNGDLKPRNMLSIRDPKVSAAATGSTDLTTLAKAMAASGTDTTFHGDQQSKGCGLMKGTSDGIMIGQALTGTFAWAQGLLRFGALGANGIASTGVTGYAHTATASGNGVHWASDPEKIPVIAEAIALVSNYNTLADSIGTRAKDAIEKVKKCMKATNKEIKREHIFLNVSHLNRELQKAVTELDKALNKQDAKAEAKQQPNCDDKKQIECGDTPGCGWHKAEGKCEAKDGEGQKNQATGEKDANKNRCTQHGTNKEACEKENTPGQSAVCGFRKGKDGETDEPDKEKCRNGSFLTSKQFAFSVVSAAFMALLF.

Residues 1-22 form the signal peptide; that stretch reads MIHSNKVATVVLALISSWPADG. 2 disulfides stabilise this stretch: Cys37/Cys161 and Cys144/Cys214. N-linked (GlcNAc...) asparagine glycans are attached at residues Asn74 and Asn95. An N-linked (GlcNAc...) asparagine glycan is attached at Asn329. Residues 388-449 are disordered; the sequence is AKDGEGQKNQ…ETDEPDKEKC (62 aa). 2 stretches are compositionally biased toward basic and acidic residues: residues 414 to 423 and 435 to 449; these read TNKEACEKEN and KGKDGETDEPDKEKC. A lipid anchor (GPI-anchor amidated asparagine) is attached at Asn451. The propeptide at 452–474 is removed in mature form; that stretch reads GSFLTSKQFAFSVVSAAFMALLF.

It localises to the cell membrane. Its function is as follows. VSG forms a coat on the surface of the parasite. The trypanosome evades the immune response of the host by expressing a series of antigenically distinct VSGs from an estimated 1000 VSG genes. This Trypanosoma brucei brucei protein is Variant surface glycoprotein MITAT 1.5.